Consider the following 156-residue polypeptide: D-aminoacyl-tRNA deacylase (156 aa).

The Gly-cisPro motif, important for rejection of L-amino acids signature appears at 142 to 143 (GP).

It belongs to the DTD family. In terms of assembly, homodimer.

It is found in the cytoplasm. It catalyses the reaction glycyl-tRNA(Ala) + H2O = tRNA(Ala) + glycine + H(+). The catalysed reaction is a D-aminoacyl-tRNA + H2O = a tRNA + a D-alpha-amino acid + H(+). Functionally, an aminoacyl-tRNA editing enzyme that deacylates mischarged D-aminoacyl-tRNAs. Also deacylates mischarged glycyl-tRNA(Ala), protecting cells against glycine mischarging by AlaRS. Acts via tRNA-based rather than protein-based catalysis; rejects L-amino acids rather than detecting D-amino acids in the active site. By recycling D-aminoacyl-tRNA to D-amino acids and free tRNA molecules, this enzyme counteracts the toxicity associated with the formation of D-aminoacyl-tRNA entities in vivo and helps enforce protein L-homochirality. In Cupriavidus metallidurans (strain ATCC 43123 / DSM 2839 / NBRC 102507 / CH34) (Ralstonia metallidurans), this protein is D-aminoacyl-tRNA deacylase.